The sequence spans 353 residues: AA9 family lytic polysaccharide monooxygenase A (353 aa).

The first 19 residues, 1–19 (MKSTFGLLALAAAAKMAHA), serve as a signal peptide directing secretion. H20 and H102 together coordinate Cu(2+). C62 and C183 are oxidised to a cystine. H169 lines the O2 pocket. Y180 provides a ligand contact to Cu(2+). The segment covering 266 to 276 (KPTTTTAAAPA) has biased composition (low complexity). The segment at 266–316 (KPTTTTAAAPAETDSCDGDDDDYETETPAPQASATQAPAPQRPAPQTPSGS) is disordered. A compositionally biased stretch (acidic residues) spans 279–290 (DSCDGDDDDYET). Residues 291–304 (ETPAPQASATQAPA) show a composition bias toward low complexity. Residues 315–351 (GSVKEWYQCGGINYTGAKNCESGLVCKEWNPYYHQCI) form the CBM1 domain. N327 carries an N-linked (GlcNAc...) asparagine glycan.

Belongs to the polysaccharide monooxygenase AA9 family. The cofactor is Cu(2+).

It localises to the secreted. It carries out the reaction [(1-&gt;4)-beta-D-glucosyl]n+m + reduced acceptor + O2 = 4-dehydro-beta-D-glucosyl-[(1-&gt;4)-beta-D-glucosyl]n-1 + [(1-&gt;4)-beta-D-glucosyl]m + acceptor + H2O.. Lytic polysaccharide monooxygenase (LPMO) that depolymerizes crystalline and amorphous polysaccharides via the oxidation of scissile alpha- or beta-(1-4)-glycosidic bonds, yielding C4 oxidation products. Catalysis by LPMOs requires the reduction of the active-site copper from Cu(II) to Cu(I) by a reducing agent and H(2)O(2) or O(2) as a cosubstrate. In Aspergillus clavatus (strain ATCC 1007 / CBS 513.65 / DSM 816 / NCTC 3887 / NRRL 1 / QM 1276 / 107), this protein is AA9 family lytic polysaccharide monooxygenase A (eglD).